The following is a 584-amino-acid chain: Protein BONZAI 3 (584 aa).

The interval 1-23 (MGGCLSGDVKGGKQAIGGVQQRP) is disordered. The N-myristoyl glycine moiety is linked to residue Gly-2. 2 C2 domains span residues 34–167 (HNDA…TLTL) and 178–305 (NRNL…NFVY). Positions 67, 73, 126, 128, and 145 each coordinate Ca(2+). The 220-residue stretch at 344-563 (NFMVAVDFTA…SVVQALLEEL (220 aa)) folds into the VWFA domain.

It belongs to the copine family. Interacts with BAP1 and BAP2. Ca(2+) is required as a cofactor. In terms of tissue distribution, expressed at an extremely low level.

It is found in the cell membrane. Its function is as follows. Negative regulator of cell death and defense responses. Repress a number of R genes and may have effects in promoting growth and development. May function in membrane trafficking and in fusion of vesicles with plasma membrane. The protein is Protein BONZAI 3 (BON3) of Arabidopsis thaliana (Mouse-ear cress).